The chain runs to 239 residues: Methylthioribulose-1-phosphate dehydratase (239 aa).

Cys-94 serves as a coordination point for substrate. 2 residues coordinate Zn(2+): His-112 and His-114. The active-site Proton donor/acceptor is the Glu-136. Residue His-192 coordinates Zn(2+).

It belongs to the aldolase class II family. MtnB subfamily. Requires Zn(2+) as cofactor.

Its subcellular location is the cytoplasm. The enzyme catalyses 5-(methylsulfanyl)-D-ribulose 1-phosphate = 5-methylsulfanyl-2,3-dioxopentyl phosphate + H2O. The protein operates within amino-acid biosynthesis; L-methionine biosynthesis via salvage pathway; L-methionine from S-methyl-5-thio-alpha-D-ribose 1-phosphate: step 2/6. In terms of biological role, catalyzes the dehydration of methylthioribulose-1-phosphate (MTRu-1-P) into 2,3-diketo-5-methylthiopentyl-1-phosphate (DK-MTP-1-P). Functions in the methionine salvage pathway. May play a role in apoptosis. The chain is Methylthioribulose-1-phosphate dehydratase from Xenopus laevis (African clawed frog).